Reading from the N-terminus, the 384-residue chain is Endoglucanase (384 aa).

The signal sequence occupies residues 1–25; the sequence is MTRRRLLHAGTLAGVAALLPAAALA. Glu63 serves as the catalytic Proton donor. Asp124 (nucleophile) is an active-site residue.

The protein belongs to the glycosyl hydrolase 8 (cellulase D) family.

It localises to the secreted. The catalysed reaction is Endohydrolysis of (1-&gt;4)-beta-D-glucosidic linkages in cellulose, lichenin and cereal beta-D-glucans.. The protein operates within glycan metabolism; bacterial cellulose biosynthesis. In terms of biological role, hydrolyzes carboxymethylcellulose. This chain is Endoglucanase (bcsZ), found in Xanthomonas axonopodis pv. citri (strain 306).